We begin with the raw amino-acid sequence, 340 residues long: Glyceraldehyde-3-phosphate dehydrogenase (340 aa).

NAD(+) is bound by residues 11 to 12 (TI) and Gly-109. Residue 138 to 140 (SCN) participates in D-glyceraldehyde 3-phosphate binding. The Nucleophile role is filled by Cys-139. Arg-167 provides a ligand contact to NAD(+). 193–194 (HA) contributes to the D-glyceraldehyde 3-phosphate binding site. Gln-300 is a binding site for NAD(+).

The protein belongs to the glyceraldehyde-3-phosphate dehydrogenase family. Homotetramer.

It localises to the cytoplasm. The catalysed reaction is D-glyceraldehyde 3-phosphate + phosphate + NADP(+) = (2R)-3-phospho-glyceroyl phosphate + NADPH + H(+). It carries out the reaction D-glyceraldehyde 3-phosphate + phosphate + NAD(+) = (2R)-3-phospho-glyceroyl phosphate + NADH + H(+). Its pathway is carbohydrate degradation; glycolysis; pyruvate from D-glyceraldehyde 3-phosphate: step 1/5. This chain is Glyceraldehyde-3-phosphate dehydrogenase, found in Saccharolobus islandicus (strain Y.N.15.51 / Yellowstone #2) (Sulfolobus islandicus).